We begin with the raw amino-acid sequence, 167 residues long: Small ribosomal subunit protein uS7c (167 aa).

It belongs to the universal ribosomal protein uS7 family. As to quaternary structure, part of the 30S ribosomal subunit.

The protein localises to the plastid. It is found in the chloroplast. One of the primary rRNA binding proteins, it binds directly to 16S rRNA where it nucleates assembly of the head domain of the 30S subunit. The polypeptide is Small ribosomal subunit protein uS7c (rps7) (Tetradesmus obliquus (Green alga)).